Consider the following 219-residue polypeptide: Thymidylate kinase (219 aa).

7 to 14 (GIDGAGKS) serves as a coordination point for ATP.

It belongs to the thymidylate kinase family.

The catalysed reaction is dTMP + ATP = dTDP + ADP. Its function is as follows. Phosphorylation of dTMP to form dTDP in both de novo and salvage pathways of dTTP synthesis. The polypeptide is Thymidylate kinase (Chlorobium phaeobacteroides (strain DSM 266 / SMG 266 / 2430)).